Reading from the N-terminus, the 116-residue chain is MASMVMNVLCVAVACMVFSASYADAISCGQVTSGLVPCFGYLAAGGPVPPACCNGVRGLNNAAKTTPDRQTACGCLKGILAANTRINLNNANSLPGKCGISIGYKITPNIDCSKIH.

The first 25 residues, 1 to 25 (MASMVMNVLCVAVACMVFSASYADA), serve as a signal peptide directing secretion. 4 cysteine pairs are disulfide-bonded: Cys-28/Cys-75, Cys-38/Cys-52, Cys-53/Cys-98, and Cys-73/Cys-112.

The protein belongs to the plant LTP family.

Functionally, plant non-specific lipid-transfer proteins transfer phospholipids as well as galactolipids across membranes. May play a role in wax or cutin deposition in the cell walls of expanding epidermal cells and certain secretory tissues. This Gerbera hybrida (Daisy) protein is Non-specific lipid-transfer protein.